The chain runs to 876 residues: Beta-glucosidase 1 (876 aa).

An N-terminal signal peptide occupies residues Met-1–Ala-17. N-linked (GlcNAc...) asparagine glycosylation is found at Asn-22, Asn-75, Asn-224, and Asn-267. The active site involves Asp-295. Residues Asn-332, Asn-339, Asn-372, Asn-389, Asn-426, Asn-544, Asn-585, Asn-739, Asn-780, and Asn-790 are each glycosylated (N-linked (GlcNAc...) asparagine).

Belongs to the glycosyl hydrolase 3 family.

The catalysed reaction is Hydrolysis of terminal, non-reducing beta-D-glucosyl residues with release of beta-D-glucose.. It functions in the pathway glycan metabolism; cellulose degradation. The protein is Beta-glucosidase 1 (BGL1) of Saccharomycopsis fibuligera (Yeast).